We begin with the raw amino-acid sequence, 333 residues long: D-2-hydroxyacid dehydrogenase (NAD+) (333 aa).

Y100 contributes to the 4-methyl-2-oxopentanoate binding site. NAD(+) contacts are provided by H155, I156, D175, V205, N211, T232, R234, and D258. R234 is an active-site residue. The active site involves E263. H295 contacts 4-methyl-2-oxopentanoate. The active-site Proton donor is the H295.

Belongs to the D-isomer specific 2-hydroxyacid dehydrogenase family. As to quaternary structure, homodimer.

The enzyme catalyses a (2R)-2-hydroxycarboxylate + NAD(+) = a 2-oxocarboxylate + NADH + H(+). It catalyses the reaction (2R)-hydroxy-4-methylpentanoate + NAD(+) = 4-methyl-2-oxopentanoate + NADH + H(+). The catalysed reaction is (R)-3-phenyllactate + NAD(+) = 3-phenylpyruvate + NADH + H(+). Completely inhibited In the presence of 0.1 mM Hg(2+). No influence on the activity could be detected with Mg(2+) and Ca(2+) and only very weak effects with Cd(2+), Co(2+) and Mn(2+). Reducing agents and thiol group reagents do not affect catalytic activity. Functionally, catalyzes the NADH-dependent reversible reduction of various 2-ketocarboxylic acids to the corresponding D-2-hydroxycarboxylic acids. In vitro can use various substrates, including 4-methyl-2-oxopentanoate (2-oxoisocaproate), 2-oxopentanoate, 2-oxohexanoate and phenylpyruvate. This Lacticaseibacillus paracasei (Lactobacillus paracasei) protein is D-2-hydroxyacid dehydrogenase (NAD+).